The following is an 865-amino-acid chain: Eukaryotic translation initiation factor 3 subunit C (865 aa).

Disordered regions lie at residues 1–92 (MSRF…AKDK) and 206–243 (EDEE…VGKG). Composition is skewed to acidic residues over residues 16-54 (SSDE…DSDA) and 69-80 (DDDSSDEEDSDA). Residues 82–92 (VTTKVKSAKDK) show a composition bias toward basic and acidic residues. Residues 226–235 (ATAEDEEDDE) show a composition bias toward acidic residues. Positions 606-780 (FHMHINLELL…QTVIFRKGVE (175 aa)) constitute a PCI domain. The disordered stretch occupies residues 801-865 (SNERTLEQRT…GGALGAAVRA (65 aa)). Positions 808 to 817 (QRTQGTSNAF) are enriched in polar residues. The span at 822-841 (GRGGRGGGRGRGGGRGGPRF) shows a compositional bias: gly residues.

It belongs to the eIF-3 subunit C family. As to quaternary structure, component of the eukaryotic translation initiation factor 3 (eIF-3) complex.

The protein localises to the cytoplasm. Functionally, component of the eukaryotic translation initiation factor 3 (eIF-3) complex, which is involved in protein synthesis of a specialized repertoire of mRNAs and, together with other initiation factors, stimulates binding of mRNA and methionyl-tRNAi to the 40S ribosome. The eIF-3 complex specifically targets and initiates translation of a subset of mRNAs involved in cell proliferation. The chain is Eukaryotic translation initiation factor 3 subunit C from Pyricularia oryzae (strain 70-15 / ATCC MYA-4617 / FGSC 8958) (Rice blast fungus).